Here is a 316-residue protein sequence, read N- to C-terminus: CD276 antigen (316 aa).

An N-terminal signal peptide occupies residues 1-28; that stretch reads MLRGWGGPSVGVCVRTALGVLCLCLTGA. The region spanning 29-139 is the Ig-like V-type domain; that stretch reads VEVQVSEDPV…DSAAVSLQVA (111 aa). At 29 to 248 the chain is on the extracellular side; the sequence is VEVQVSEDPV…GQPLTFPPEA (220 aa). N-linked (GlcNAc...) asparagine glycosylation is found at Asn104, Asn189, and Asn215. Positions 145-238 constitute an Ig-like C2-type domain; sequence PSMTLEPNKD…QDAHGSVTIT (94 aa). Cysteines 165 and 220 form a disulfide. Residues 249 to 269 traverse the membrane as a helical segment; it reads LWVTVGLSVCLVVLLVALAFV. The Cytoplasmic segment spans residues 270-316; sequence CWRKIKQSCEEENAGAEDQDGDGEGSKTALRPLKPSENKEDDGQEIA. A compositionally biased stretch (acidic residues) spans 280–292; the sequence is EENAGAEDQDGDG. Positions 280-316 are disordered; sequence EENAGAEDQDGDGEGSKTALRPLKPSENKEDDGQEIA.

It belongs to the immunoglobulin superfamily. BTN/MOG family. Interacts with TREML2 and this interaction enhances T-cell activation. Ubiquitous.

The protein localises to the membrane. Its function is as follows. Modulates T-cell-mediated immune responses and the development of acute and chronic transplant rejection. Plays a positive regulatory role in bone formation and has a dual role in the bone-immune interface. Induces antitumor immunity as it activates both acquired and innate immunity leading to natural killer cell and CD8 T-cell dependent killing of tumor cells. The chain is CD276 antigen (Cd276) from Mus musculus (Mouse).